The sequence spans 337 residues: Glyceraldehyde-3-phosphate dehydrogenase 2 (337 aa).

NADP(+) is bound by residues 11-12 (RI), D35, R80, and T122. Residues 153-155 (SCT), T184, R199, 212-213 (TG), and R235 each bind D-glyceraldehyde 3-phosphate. The active-site Nucleophile is C154. An NADP(+)-binding site is contributed by N317.

It belongs to the glyceraldehyde-3-phosphate dehydrogenase family. As to quaternary structure, homotetramer.

The protein resides in the cytoplasm. The enzyme catalyses D-glyceraldehyde 3-phosphate + phosphate + NADP(+) = (2R)-3-phospho-glyceroyl phosphate + NADPH + H(+). The catalysed reaction is D-glyceraldehyde 3-phosphate + phosphate + NAD(+) = (2R)-3-phospho-glyceroyl phosphate + NADH + H(+). The protein operates within carbohydrate biosynthesis; Calvin cycle. Gap2 has a major role in carbon fixation as a component of the Calvin cycle. Catalyzes the oxidative phosphorylation of glyceraldehyde 3-phosphate (G3P) to 1,3-bisphosphoglycerate (BPG) using the cofactor NAD. The first reaction step involves the formation of a hemiacetal intermediate between G3P and a cysteine residue, and this hemiacetal intermediate is then oxidized to a thioester, with concomitant reduction of NAD to NADH. The reduced NADH is then exchanged with the second NAD, and the thioester is attacked by a nucleophilic inorganic phosphate to produce BPG. The polypeptide is Glyceraldehyde-3-phosphate dehydrogenase 2 (gap2) (Trichormus variabilis (strain ATCC 29413 / PCC 7937) (Anabaena variabilis)).